We begin with the raw amino-acid sequence, 710 residues long: Chaperonin-containing T-complex member BBS12 (710 aa).

It belongs to the TCP-1 chaperonin family. BBS12 subfamily. Component of the chaperonin-containing T-complex (TRiC), a heterooligomeric complex of about 850 to 900 kDa that forms two stacked rings, 12 to 16 nm in diameter. Interacts with MKKS.

It localises to the cell projection. Its subcellular location is the cilium. In terms of biological role, component of the chaperonin-containing T-complex (TRiC), a molecular chaperone complex that assists the folding of proteins upon ATP hydrolysis. As part of the TRiC complex may play a role in the assembly of BBSome, a complex involved in ciliogenesis regulating transports vesicles to the cilia. Involved in adipogenic differentiation. This Pongo abelii (Sumatran orangutan) protein is Chaperonin-containing T-complex member BBS12 (BBS12).